We begin with the raw amino-acid sequence, 270 residues long: MPELPEVETTRRGIAPHLEGQRVSRVVVRDRRLRWPIPEDLDVRLSGQRIVSVERRAKYLLINAEVGTLISHLGMSGNLRLVELGLPAAKHEHVDIELESGLMLRYTDPRRFGAMLWSLDPLNHELLLRLGPEPLTDLFDGERLFQLSRGRSMAVKPFIMDNAVVVGVGNIYATEALFAAGIDPRREAGGISRARYLKLAIEIKRVLAAAIEQGGTTLRDFIGGDGQPGYFQQELFVYGRGGQPCKVCGTALREVKLGQRASVYCPRCQR.

The active-site Schiff-base intermediate with DNA is the Pro2. Catalysis depends on Glu3, which acts as the Proton donor. The Proton donor; for beta-elimination activity role is filled by Lys58. DNA contacts are provided by His91, Arg110, and Arg151. An FPG-type zinc finger spans residues 236–270 (FVYGRGGQPCKVCGTALREVKLGQRASVYCPRCQR). The active-site Proton donor; for delta-elimination activity is Arg260.

It belongs to the FPG family. As to quaternary structure, monomer. Zn(2+) is required as a cofactor.

The catalysed reaction is Hydrolysis of DNA containing ring-opened 7-methylguanine residues, releasing 2,6-diamino-4-hydroxy-5-(N-methyl)formamidopyrimidine.. The enzyme catalyses 2'-deoxyribonucleotide-(2'-deoxyribose 5'-phosphate)-2'-deoxyribonucleotide-DNA = a 3'-end 2'-deoxyribonucleotide-(2,3-dehydro-2,3-deoxyribose 5'-phosphate)-DNA + a 5'-end 5'-phospho-2'-deoxyribonucleoside-DNA + H(+). Involved in base excision repair of DNA damaged by oxidation or by mutagenic agents. Acts as a DNA glycosylase that recognizes and removes damaged bases. Has a preference for oxidized purines, such as 7,8-dihydro-8-oxoguanine (8-oxoG). Has AP (apurinic/apyrimidinic) lyase activity and introduces nicks in the DNA strand. Cleaves the DNA backbone by beta-delta elimination to generate a single-strand break at the site of the removed base with both 3'- and 5'-phosphates. This chain is Formamidopyrimidine-DNA glycosylase, found in Pseudomonas putida (strain GB-1).